A 314-amino-acid chain; its full sequence is Probable manganese-dependent inorganic pyrophosphatase (314 aa).

Mn(2+) is bound by residues histidine 7, aspartate 11, aspartate 13, aspartate 72, histidine 94, and aspartate 146.

It belongs to the PPase class C family. It depends on Mn(2+) as a cofactor.

The protein localises to the cytoplasm. It catalyses the reaction diphosphate + H2O = 2 phosphate + H(+). The polypeptide is Probable manganese-dependent inorganic pyrophosphatase (ppaC) (Deinococcus radiodurans (strain ATCC 13939 / DSM 20539 / JCM 16871 / CCUG 27074 / LMG 4051 / NBRC 15346 / NCIMB 9279 / VKM B-1422 / R1)).